Here is a 963-residue protein sequence, read N- to C-terminus: Protein bicaudal C homolog 1-A (963 aa).

The tract at residues 1 to 48 (MAAQCESIGGDMNQSDPGSNSERSADSPVPGSEDDSPHDPEWREERFR) is disordered. A compositionally biased stretch (polar residues) spans 12–22 (MNQSDPGSNSE). Positions 35–48 (DSPHDPEWREERFR) are enriched in basic and acidic residues. 2 KH domains span residues 128–195 (RVTL…RVRI) and 280–344 (PVST…RQYL). Over residues 592–601 (EASRQSNNHS) the composition is skewed to polar residues. Disordered stretches follow at residues 592 to 613 (EASRQSNNHSSAEEVNSKTDPE), 668 to 713 (ERLL…TSQS), and 767 to 834 (LRRA…NKSA). Basic and acidic residues-rich tracts occupy residues 602 to 612 (SAEEVNSKTDP) and 683 to 696 (VTDKKAPGSERAAE). The span at 784 to 797 (ENSSLSRSNSREQL) shows a compositional bias: low complexity. Over residues 812–824 (IDSSQNDYSSSIG) the composition is skewed to polar residues. One can recognise an SAM domain in the interval 862-925 (FKGSDLPELF…LLAISELNKN (64 aa)).

Belongs to the BicC family.

Functionally, putative RNA-binding protein. May be involved in regulating gene expression during embryonic development. Seems to be involved in endoderm formation. Ectopic expression results in endoderm formation in the absence of mesoderm induction. The polypeptide is Protein bicaudal C homolog 1-A (bicc1-a) (Xenopus laevis (African clawed frog)).